The sequence spans 332 residues: Galactosylgalactosylxylosylprotein 3-beta-glucuronosyltransferase 1 (332 aa).

Residues 1–6 (MPKRRD) are Cytoplasmic-facing. Residues 3–5 (KRR) are essential for transport from endoplasmic reticulum to Golgi apparatus and interaction with SAR1A. Residues 7 to 27 (ILAIVLIVLPWTLLITVWHQS) form a helical; Signal-anchor for type II membrane protein membrane-spanning segment. At 28–332 (TLAPLLAVHK…KGFTDPSVEI (305 aa)) the chain is on the lumenal side. UDP-alpha-D-glucuronate is bound at residue 91–93 (PTY). Thr-103 and Thr-108 each carry phosphothreonine. Position 122 (Asp-122) interacts with UDP-alpha-D-glucuronate. Asn-140 carries N-linked (GlcNAc...) asparagine glycosylation. Residues Arg-165 and Arg-170 each coordinate UDP-alpha-D-glucuronate. Asn-184 carries an N-linked (GlcNAc...) asparagine glycan. 195–197 (DDD) is a binding site for UDP-alpha-D-glucuronate. Asp-197 provides a ligand contact to Mn(2+). An interaction with galactose moiety of substrate glycoprotein region spans residues 243–252 (FDPHRPFAID). Glu-282 (proton donor/acceptor) is an active-site residue. N-linked (GlcNAc...) asparagine glycosylation occurs at Asn-301. 309 to 311 (HTR) serves as a coordination point for UDP-alpha-D-glucuronate.

This sequence belongs to the glycosyltransferase 43 family. In terms of assembly, homodimer. Interacts with SAR1A. It depends on Mn(2+) as a cofactor. Post-translationally, the soluble form derives from the membrane form by proteolytic processing.

The protein resides in the golgi apparatus membrane. The protein localises to the secreted. The catalysed reaction is 3-O-(beta-D-galactosyl-(1-&gt;3)-beta-D-galactosyl-(1-&gt;4)-beta-D-xylosyl)-L-seryl-[protein] + UDP-alpha-D-glucuronate = 3-O-(beta-D-GlcA-(1-&gt;3)-beta-D-Gal-(1-&gt;3)-beta-D-Gal-(1-&gt;4)-beta-D-Xyl)-L-seryl-[protein] + UDP + H(+). Its pathway is protein modification; protein glycosylation. In terms of biological role, involved in the biosynthesis of L2/HNK-1 carbohydrate epitope on glycoproteins. Can also play a role in glycosaminoglycan biosynthesis. Substrates include asialo-orosomucoid (ASOR), asialo-fetuin, and asialo-neural cell adhesion molecule. Requires sphingomyelin for activity: stearoyl-sphingomyelin was the most effective, followed by palmitoyl-sphingomyelin and lignoceroyl-sphingomyelin. Activity was demonstrated only for sphingomyelin with a saturated fatty acid and not for that with an unsaturated fatty acid, regardless of the length of the acyl group. The sequence is that of Galactosylgalactosylxylosylprotein 3-beta-glucuronosyltransferase 1 from Pan troglodytes (Chimpanzee).